A 165-amino-acid polypeptide reads, in one-letter code: uncharacterized protein (165 aa).

Over residues 22-34 the composition is skewed to polar residues; that stretch reads QQANQENMSSRTD. A disordered region spans residues 22–45; sequence QQANQENMSSRTDSPIPPFGESEQ.

This is an uncharacterized protein from Homo sapiens (Human).